Consider the following 282-residue polypeptide: Flagellin (282 aa).

Belongs to the bacterial flagellin family.

It is found in the secreted. The protein resides in the bacterial flagellum. Functionally, flagellin is the subunit protein which polymerizes to form the filaments of bacterial flagella. The flagellum is required to cause a persistent disease in a murine model of infection. This chain is Flagellin (fliC), found in Brucella melitensis biotype 1 (strain ATCC 23456 / CCUG 17765 / NCTC 10094 / 16M).